The chain runs to 465 residues: Lysophospholipid acyltransferase 2 (465 aa).

Transmembrane regions (helical) follow at residues 15 to 35 (VSVAVLRFLLCFVATIPISFL), 55 to 75 (FLSYLSFGFSSNLHFLVPMTI), 86 to 106 (LSGFITFFLGFAYLIGCHVFY), 161 to 181 (SLIEYFGYCLCCGSHFAGPVF), 214 to 234 (AVFQAAICMALYLYLVPQFPL), 266 to 286 (YFIWSISEASIIISGLGFSGW), 356 to 376 (AVWHGLYPGYIIFFVQSALMI), 399 to 419 (VLVLINFLYTVVVLNYSSVGF), and 434 to 454 (VYYIGTVIPIAVLLLSYLVPV). H359 is a catalytic residue.

It belongs to the membrane-bound acyltransferase family. Interacts with GPAT9 and DGAT1. In terms of tissue distribution, expressed in rosette leaves, pollen grains, developing embryos and developing seeds.

It is found in the endoplasmic reticulum membrane. It carries out the reaction a 1-acyl-sn-glycero-3-phosphocholine + an acyl-CoA = a 1,2-diacyl-sn-glycero-3-phosphocholine + CoA. The enzyme catalyses 1-(9Z-octadecenoyl)-sn-glycero-3-phosphocholine + (9Z)-octadecenoyl-CoA = 1,2-di-(9Z-octadecenoyl)-sn-glycero-3-phosphocholine + CoA. It catalyses the reaction 1-(9Z-octadecenoyl)-sn-glycero-3-phosphocholine + (9Z,12Z)-octadecadienoyl-CoA = 1-(9Z)-octadecenoyl-2-(9Z,12Z)-octadecadienoyl-sn-glycero-3-phosphocholine + CoA. The catalysed reaction is (9Z,12Z,15Z)-octadecatrienoyl-CoA + 1-(9Z-octadecenoyl)-sn-glycero-3-phosphocholine = 1-(9Z-octadecaenoyl)-2-(9Z,12Z,15Z-octadecatrienoyl)-sn-glycero-3-phosphocholine + CoA. It carries out the reaction a 1-acyl-sn-glycero-3-phosphoethanolamine + an acyl-CoA = a 1,2-diacyl-sn-glycero-3-phosphoethanolamine + CoA. The enzyme catalyses a 1-acyl-sn-glycero-3-phospho-L-serine + an acyl-CoA = a 1,2-diacyl-sn-glycero-3-phospho-L-serine + CoA. Lysophospholipid acyltransferase with broad specificity. Mediates the conversion of lysophosphatidylethanolamine (1-acyl-sn-glycero-3-phosphoethanolamine or LPE) into phosphatidylethanolamine (1,2-diacyl-sn-glycero-3-phosphoethanolamine or PE) (LPEAT activity). Catalyzes the acylation of lysophosphatidylserine (1-acyl-2-hydroxy-sn-glycero-3-phospho-L-serine or LPS) into phosphatidylserine (1,2-diacyl-sn-glycero-3-phospho-L-serine or PS) (LPSAT activity). Can convert lysophosphatidylcholine (1-acyl-sn-glycero-3-phosphocholine or LPC) into phosphatidylcholine (1,2-diacyl-sn-glycero-3-phosphocholine or PC) (LPCAT activity). Exhibits preference for C18-unsaturated acyl-CoA when transferring an acyl group to lysophosphatidylcholine. Can also utilize lysophosphatidylglycerol (LPG) as substrate in vitro. Has neither activity towards lysophosphatidic acid (LPA) nor lysophosphatidylinositol (LPI). Lysophospholipid acyltransferases catalyze the reacylation step of the phospholipid remodeling pathway also known as the Lands cycle. The primary function of the Lands cycle is to provide a route for acyl remodeling to modify fatty acid (FA) composition of phospholipids derived from the Kennedy pathway. Is involved in PC acyl editing and phosphocholine headgroup exchange between PC and diacylglycerols. This processes control the majority of acyl fluxes through PC to provide polyunsaturated fatty acids for triacylglycerols synthesis in seeds. Involved with LPCAT1 in the direct incorporation of newly synthesized fatty acids exported form the chloroplast into PC through acyl editing. The protein is Lysophospholipid acyltransferase 2 of Arabidopsis thaliana (Mouse-ear cress).